Here is a 140-residue protein sequence, read N- to C-terminus: MNLEALCKEAGLSFYDDELVSENGRKIYRIYVQKEGGVNLDDCARLSEILSPIFDVEPPVNGEYFLEVSSPGLERKLSKIEHFAKSIGELVKITTNEKEKFEAKIIAVDDENITLENLENKEKTTINFNDIKKARTFVEW.

It belongs to the RimP family.

Its subcellular location is the cytoplasm. In terms of biological role, required for maturation of 30S ribosomal subunits. The polypeptide is Ribosome maturation factor RimP (Campylobacter jejuni subsp. jejuni serotype O:6 (strain 81116 / NCTC 11828)).